We begin with the raw amino-acid sequence, 558 residues long: Glucose-6-phosphate isomerase (558 aa).

Position 2 is an N-acetylalanine (A2). At K12 the chain carries N6-acetyllysine. 2 positions are modified to phosphoserine: S86 and S107. K142 carries the N6-acetyllysine modification. A D-glucose 6-phosphate-binding site is contributed by 159-160; sequence GS. S185 is subject to Phosphoserine; by CK2. 210 to 215 contacts D-glucose 6-phosphate; that stretch reads SKTFTT. At T250 the chain carries Phosphothreonine. The D-glucose 6-phosphate site is built by Q354, E358, and H389. E358 (proton donor) is an active-site residue. Residue H389 is part of the active site. The residue at position 454 (K454) is an N6-acetyllysine; alternate. K454 bears the N6-malonyllysine; alternate mark. The residue at position 454 (K454) is an N6-succinyllysine; alternate. Position 455 is a phosphoserine (S455). K519 provides a ligand contact to D-glucose 6-phosphate. The active site involves K519.

It belongs to the GPI family. As to quaternary structure, homodimer; in the catalytically active form. Monomer in the secreted form. Post-translationally, phosphorylation at Ser-185 by CK2 has been shown to decrease enzymatic activity and may contribute to secretion by a non-classical secretory pathway. In terms of processing, ISGylated.

The protein resides in the cytoplasm. Its subcellular location is the secreted. The catalysed reaction is alpha-D-glucose 6-phosphate = beta-D-fructose 6-phosphate. Its pathway is carbohydrate degradation; glycolysis; D-glyceraldehyde 3-phosphate and glycerone phosphate from D-glucose: step 2/4. In terms of biological role, in the cytoplasm, catalyzes the conversion of glucose-6-phosphate to fructose-6-phosphate, the second step in glycolysis, and the reverse reaction during gluconeogenesis. Besides it's role as a glycolytic enzyme, also acts as a secreted cytokine: acts as an angiogenic factor (AMF) that stimulates endothelial cell motility. Acts as a neurotrophic factor, neuroleukin, for spinal and sensory neurons. It is secreted by lectin-stimulated T-cells and induces immunoglobulin secretion. This Rattus norvegicus (Rat) protein is Glucose-6-phosphate isomerase.